We begin with the raw amino-acid sequence, 445 residues long: UNC93-like protein MFSD11 (445 aa).

Residues 8–28 (LLNIVILGVGFMFMFTAFQTS) traverse the membrane as a helical segment. Asn40 is a glycosylation site (N-linked (GlcNAc...) asparagine). A run of 4 helical transmembrane segments spans residues 52-72 (LAII…VIAV), 74-94 (GCQM…AMFI), 98-118 (TWSF…LWTA), and 138-158 (IFWA…YLAW). N-linked (GlcNAc...) asparagine glycosylation occurs at Asn163. The next 7 helical transmembrane spans lie at 170-190 (RTVF…FFLI), 239-259 (MLLL…YSGV), 277-297 (LIGL…GLFG), 309-329 (PVVI…YLYM), 343-363 (LSAF…LLGL), 385-405 (APAF…AFFY), and 415-435 (LLIL…VEWG).

This sequence belongs to the unc-93 family.

Its subcellular location is the membrane. This chain is UNC93-like protein MFSD11 (mfsd11), found in Xenopus laevis (African clawed frog).